The chain runs to 244 residues: 3-deoxy-manno-octulosonate cytidylyltransferase (244 aa).

This sequence belongs to the KdsB family.

It localises to the cytoplasm. It carries out the reaction 3-deoxy-alpha-D-manno-oct-2-ulosonate + CTP = CMP-3-deoxy-beta-D-manno-octulosonate + diphosphate. It functions in the pathway nucleotide-sugar biosynthesis; CMP-3-deoxy-D-manno-octulosonate biosynthesis; CMP-3-deoxy-D-manno-octulosonate from 3-deoxy-D-manno-octulosonate and CTP: step 1/1. The protein operates within bacterial outer membrane biogenesis; lipopolysaccharide biosynthesis. Functionally, activates KDO (a required 8-carbon sugar) for incorporation into bacterial lipopolysaccharide in Gram-negative bacteria. The protein is 3-deoxy-manno-octulosonate cytidylyltransferase of Rickettsia bellii (strain OSU 85-389).